A 137-amino-acid polypeptide reads, in one-letter code: Nucleoside diphosphate kinase (137 aa).

Residues Lys-11, Phe-59, Arg-87, Thr-93, Arg-104, and Asn-114 each coordinate ATP. His-117 acts as the Pros-phosphohistidine intermediate in catalysis.

Belongs to the NDK family. In terms of assembly, homotetramer. Mg(2+) serves as cofactor.

The protein localises to the cytoplasm. It catalyses the reaction a 2'-deoxyribonucleoside 5'-diphosphate + ATP = a 2'-deoxyribonucleoside 5'-triphosphate + ADP. It carries out the reaction a ribonucleoside 5'-diphosphate + ATP = a ribonucleoside 5'-triphosphate + ADP. Major role in the synthesis of nucleoside triphosphates other than ATP. The ATP gamma phosphate is transferred to the NDP beta phosphate via a ping-pong mechanism, using a phosphorylated active-site intermediate. The sequence is that of Nucleoside diphosphate kinase from Frankia alni (strain DSM 45986 / CECT 9034 / ACN14a).